A 337-amino-acid chain; its full sequence is Ferrochelatase (337 aa).

H189 and E293 together coordinate Fe cation.

Belongs to the ferrochelatase family.

It is found in the cytoplasm. It catalyses the reaction heme b + 2 H(+) = protoporphyrin IX + Fe(2+). The protein operates within porphyrin-containing compound metabolism; protoheme biosynthesis; protoheme from protoporphyrin-IX: step 1/1. Its function is as follows. Catalyzes the ferrous insertion into protoporphyrin IX. The polypeptide is Ferrochelatase (Pseudomonas entomophila (strain L48)).